We begin with the raw amino-acid sequence, 88 residues long: Putative regulatory protein Npun_R3866 (88 aa).

The protein belongs to the RemA family.

The protein is Putative regulatory protein Npun_R3866 of Nostoc punctiforme (strain ATCC 29133 / PCC 73102).